Reading from the N-terminus, the 248-residue chain is 4-hydroxy-tetrahydrodipicolinate reductase (248 aa).

Residues Gly74–Thr76 and Ser99–Phe102 contribute to the NAD(+) site. Residue His134 is the Proton donor/acceptor of the active site. Residue His135 coordinates (S)-2,3,4,5-tetrahydrodipicolinate. Lys138 serves as the catalytic Proton donor. (S)-2,3,4,5-tetrahydrodipicolinate is bound at residue Gly144 to Thr145.

This sequence belongs to the DapB family.

It localises to the cytoplasm. The enzyme catalyses (S)-2,3,4,5-tetrahydrodipicolinate + NAD(+) + H2O = (2S,4S)-4-hydroxy-2,3,4,5-tetrahydrodipicolinate + NADH + H(+). The catalysed reaction is (S)-2,3,4,5-tetrahydrodipicolinate + NADP(+) + H2O = (2S,4S)-4-hydroxy-2,3,4,5-tetrahydrodipicolinate + NADPH + H(+). Its pathway is amino-acid biosynthesis; L-lysine biosynthesis via DAP pathway; (S)-tetrahydrodipicolinate from L-aspartate: step 4/4. Functionally, catalyzes the conversion of 4-hydroxy-tetrahydrodipicolinate (HTPA) to tetrahydrodipicolinate. The chain is 4-hydroxy-tetrahydrodipicolinate reductase from Chlorobium phaeobacteroides (strain DSM 266 / SMG 266 / 2430).